A 308-amino-acid polypeptide reads, in one-letter code: Small ribosomal subunit protein uS2 (308 aa).

An N-acetylserine modification is found at S2. Laminin-binding regions lie at residues I161–R180 and R205–G229. [DE]-W-[ST] repeat units lie at residues E230–T232, D245–S247, D279–S281, D288–S290, and D306–S308. A laminin-binding region spans residues E242–S308. The segment at A262–S308 is disordered.

This sequence belongs to the universal ribosomal protein uS2 family. Monomer (37LRP) and homodimer (67LR). Component of the small ribosomal subunit. Mature ribosomes consist of a small (40S) and a large (60S) subunit. The 40S subunit contains about 33 different proteins and 1 molecule of RNA (18S). The 60S subunit contains about 49 different proteins and 3 molecules of RNA (28S, 5.8S and 5S). Interacts with rps21. Interacts with several laminins including at least lamb1. Interacts with mdk. Post-translationally, acylated. Acylation may be a prerequisite for conversion of the monomeric 37 kDa laminin receptor precursor (37LRP) to the mature dimeric 67 kDa laminin receptor (67LR), and may provide a mechanism for membrane association. In terms of processing, cleaved by stromelysin-3 (ST3) at the cell surface. Cleavage by stromelysin-3 may be a mechanism to alter cell-extracellular matrix interactions.

The protein localises to the cell membrane. It is found in the cytoplasm. It localises to the nucleus. Its function is as follows. Required for the assembly and/or stability of the 40S ribosomal subunit. Required for the processing of the 20S rRNA-precursor to mature 18S rRNA in a late step of the maturation of 40S ribosomal subunits. Also functions as a cell surface receptor for laminin. Plays a role in cell adhesion to the basement membrane and in the consequent activation of signaling transduction pathways. May play a role in cell fate determination and tissue morphogenesis. The sequence is that of Small ribosomal subunit protein uS2 (rpsa) from Danio rerio (Zebrafish).